The chain runs to 52 residues: uncharacterized protein (52 aa).

A run of 2 helical transmembrane segments spans residues isoleucine 4 to glutamate 24 and methionine 25 to valine 45.

Its subcellular location is the cell membrane. This is an uncharacterized protein from Bacillus subtilis (strain 168).